Reading from the N-terminus, the 425-residue chain is Serine--tRNA ligase (425 aa).

230 to 232 contacts L-serine; sequence TAE. 261–263 serves as a coordination point for ATP; the sequence is RSE. Glu284 contacts L-serine. 348–351 contacts ATP; sequence EISS. Residue Ser384 participates in L-serine binding.

This sequence belongs to the class-II aminoacyl-tRNA synthetase family. Type-1 seryl-tRNA synthetase subfamily. Homodimer. The tRNA molecule binds across the dimer.

Its subcellular location is the cytoplasm. The enzyme catalyses tRNA(Ser) + L-serine + ATP = L-seryl-tRNA(Ser) + AMP + diphosphate + H(+). It catalyses the reaction tRNA(Sec) + L-serine + ATP = L-seryl-tRNA(Sec) + AMP + diphosphate + H(+). The protein operates within aminoacyl-tRNA biosynthesis; selenocysteinyl-tRNA(Sec) biosynthesis; L-seryl-tRNA(Sec) from L-serine and tRNA(Sec): step 1/1. In terms of biological role, catalyzes the attachment of serine to tRNA(Ser). Is also able to aminoacylate tRNA(Sec) with serine, to form the misacylated tRNA L-seryl-tRNA(Sec), which will be further converted into selenocysteinyl-tRNA(Sec). This is Serine--tRNA ligase from Nitratidesulfovibrio vulgaris (strain DSM 19637 / Miyazaki F) (Desulfovibrio vulgaris).